Here is a 349-residue protein sequence, read N- to C-terminus: Holliday junction branch migration complex subunit RuvB (349 aa).

The segment covering 1 to 15 (MSDDYRETDPTRQPE) has biased composition (basic and acidic residues). Residues 1–25 (MSDDYRETDPTRQPEDMGEGSLRPE) form a disordered region. The segment at 1–183 (MSDDYRETDP…FGIPLRLVFY (183 aa)) is large ATPase domain (RuvB-L). ATP is bound by residues L22, R23, G64, K67, T68, T69, 130–132 (EDF), R173, Y183, and R220. T68 is a Mg(2+) binding site. The segment at 184–254 (TPEELRAIVS…LADAALGRLE (71 aa)) is small ATPAse domain (RuvB-S). The head domain (RuvB-H) stretch occupies residues 257–349 (ERGLDAMDRR…SSLEQDDSAP (93 aa)). Positions 293, 312, and 317 each coordinate DNA.

The protein belongs to the RuvB family. As to quaternary structure, homohexamer. Forms an RuvA(8)-RuvB(12)-Holliday junction (HJ) complex. HJ DNA is sandwiched between 2 RuvA tetramers; dsDNA enters through RuvA and exits via RuvB. An RuvB hexamer assembles on each DNA strand where it exits the tetramer. Each RuvB hexamer is contacted by two RuvA subunits (via domain III) on 2 adjacent RuvB subunits; this complex drives branch migration. In the full resolvosome a probable DNA-RuvA(4)-RuvB(12)-RuvC(2) complex forms which resolves the HJ.

Its subcellular location is the cytoplasm. It carries out the reaction ATP + H2O = ADP + phosphate + H(+). In terms of biological role, the RuvA-RuvB-RuvC complex processes Holliday junction (HJ) DNA during genetic recombination and DNA repair, while the RuvA-RuvB complex plays an important role in the rescue of blocked DNA replication forks via replication fork reversal (RFR). RuvA specifically binds to HJ cruciform DNA, conferring on it an open structure. The RuvB hexamer acts as an ATP-dependent pump, pulling dsDNA into and through the RuvAB complex. RuvB forms 2 homohexamers on either side of HJ DNA bound by 1 or 2 RuvA tetramers; 4 subunits per hexamer contact DNA at a time. Coordinated motions by a converter formed by DNA-disengaged RuvB subunits stimulates ATP hydrolysis and nucleotide exchange. Immobilization of the converter enables RuvB to convert the ATP-contained energy into a lever motion, pulling 2 nucleotides of DNA out of the RuvA tetramer per ATP hydrolyzed, thus driving DNA branch migration. The RuvB motors rotate together with the DNA substrate, which together with the progressing nucleotide cycle form the mechanistic basis for DNA recombination by continuous HJ branch migration. Branch migration allows RuvC to scan DNA until it finds its consensus sequence, where it cleaves and resolves cruciform DNA. In Gluconobacter oxydans (strain 621H) (Gluconobacter suboxydans), this protein is Holliday junction branch migration complex subunit RuvB.